The primary structure comprises 615 residues: DNA mismatch repair protein MutL (615 aa).

Residues 378-391 (PAPASGSRPAAPWP) show a composition bias toward low complexity. Positions 378 to 397 (PAPASGSRPAAPWPNAQPGY) are disordered.

It belongs to the DNA mismatch repair MutL/HexB family.

In terms of biological role, this protein is involved in the repair of mismatches in DNA. It is required for dam-dependent methyl-directed DNA mismatch repair. May act as a 'molecular matchmaker', a protein that promotes the formation of a stable complex between two or more DNA-binding proteins in an ATP-dependent manner without itself being part of a final effector complex. The chain is DNA mismatch repair protein MutL from Escherichia coli O127:H6 (strain E2348/69 / EPEC).